A 116-amino-acid chain; its full sequence is Venom nerve growth factor (116 aa).

Intrachain disulfides connect Cys14–Cys78, Cys56–Cys106, and Cys66–Cys108.

The protein belongs to the NGF-beta family. In terms of assembly, homodimer; non-covalently linked. Not glycosylated. Expressed by the venom gland.

It is found in the secreted. Nerve growth factor is important for the development and maintenance of the sympathetic and sensory nervous systems. It stimulates division and differentiation of sympathetic and embryonic sensory neurons as well as basal forebrain cholinergic neurons in the brain. Its relevance in the snake venom is not clear. However, it has been shown to inhibit metalloproteinase-dependent proteolysis of platelet glycoprotein Ib alpha, suggesting a metalloproteinase inhibition to prevent metalloprotease autodigestion and/or protection against prey proteases. Binds a lipid between the two protein chains in the homodimer. The lipid-bound form promotes histamine relase from mouse mast cells, contrary to the lipid-free form. This is Venom nerve growth factor from Naja naja (Indian cobra).